An 85-amino-acid polypeptide reads, in one-letter code: Large ribosomal subunit protein bL27 (85 aa).

Residues 1 to 22 (MAHKKAGGSTNNGRDSESKRLG) form a disordered region.

The protein belongs to the bacterial ribosomal protein bL27 family.

The sequence is that of Large ribosomal subunit protein bL27 from Photobacterium profundum (strain SS9).